The following is a 578-amino-acid chain: Proline--tRNA ligase (578 aa).

It belongs to the class-II aminoacyl-tRNA synthetase family. ProS type 1 subfamily. As to quaternary structure, homodimer.

It localises to the cytoplasm. It catalyses the reaction tRNA(Pro) + L-proline + ATP = L-prolyl-tRNA(Pro) + AMP + diphosphate. Catalyzes the attachment of proline to tRNA(Pro) in a two-step reaction: proline is first activated by ATP to form Pro-AMP and then transferred to the acceptor end of tRNA(Pro). As ProRS can inadvertently accommodate and process non-cognate amino acids such as alanine and cysteine, to avoid such errors it has two additional distinct editing activities against alanine. One activity is designated as 'pretransfer' editing and involves the tRNA(Pro)-independent hydrolysis of activated Ala-AMP. The other activity is designated 'posttransfer' editing and involves deacylation of mischarged Ala-tRNA(Pro). The misacylated Cys-tRNA(Pro) is not edited by ProRS. This chain is Proline--tRNA ligase, found in Burkholderia cenocepacia (strain ATCC BAA-245 / DSM 16553 / LMG 16656 / NCTC 13227 / J2315 / CF5610) (Burkholderia cepacia (strain J2315)).